Consider the following 25-residue polypeptide: Flagellar filament outer layer protein (25 aa).

In terms of assembly, the flagellum consists of an outer layer composed of repeating units of FlaA around a core that contains several antigenically related polypeptides.

The protein resides in the periplasmic flagellum. The protein localises to the periplasm. Component of the outer layer of the flagella. This chain is Flagellar filament outer layer protein (flaA), found in Treponema phagedenis.